The sequence spans 355 residues: Heavy metal-associated isoprenylated plant protein 7 (355 aa).

Residues 1-58 (MGEEEKKPEAAEEKKMEEKKPEEKKEGEDKKVDAEKKGEDSDKKPQEGESNKDSKEDS) show a composition bias toward basic and acidic residues. Positions 1–74 (MGEEEKKPEA…APAPPPPPQE (74 aa)) are disordered. Residues 63-73 (PEAPAPPPPPQ) show a composition bias toward pro residues. HMA domains lie at 72–136 (PQEV…HRQV) and 170–234 (VVTV…KHAA). Residues Cys83 and Cys86 each coordinate a metal cation. The segment at 132-157 (THRQVQLLSPIPPPPPPPEKKAEEDK) is disordered. Residues Cys181 and Cys184 each coordinate a metal cation. The tract at residues 235–308 (IMKIDPPPPP…GGGEEEGKVV (74 aa)) is disordered. The span at 254–293 (EGEKKEEEKGEGESKGEEGKDDKAKTDEEKKEGDGGKGEG) shows a compositional bias: basic and acidic residues. Cys352 carries the cysteine methyl ester modification. Cys352 is lipidated: S-farnesyl cysteine. The propeptide at 353–355 (TVM) is removed in mature form.

This sequence belongs to the HIPP family. In terms of processing, efficiently farnesylated in vitro.

In terms of biological role, heavy-metal-binding protein. Binds zinc, copper and nickel in a reversible manner. This Arabidopsis thaliana (Mouse-ear cress) protein is Heavy metal-associated isoprenylated plant protein 7.